We begin with the raw amino-acid sequence, 1822 residues long: ADP-ribosylation factor guanine nucleotide-exchange factor sec72 (1822 aa).

Disordered stretches follow at residues 1–54 (MQDA…NGMD) and 66–126 (DAVV…RASL). A Phosphoserine modification is found at serine 44. The span at 72-84 (DINTEDSSLSPAK) shows a compositional bias: polar residues. Over residues 85–110 (QENEKSPEGIEQKYQEEDLKDDKKSN) the composition is skewed to basic and acidic residues. Residues serine 122 and serine 125 each carry the phosphoserine modification. The HUS box motif lies at 547 to 551 (NYDCD). The residue at position 597 (threonine 597) is a Phosphothreonine. The residue at position 653 (serine 653) is a Phosphoserine. Position 654 is a phosphothreonine (threonine 654). Phosphoserine is present on serine 669. The region spanning 701–889 (QFESNKQRKK…GFVYDDILKN (189 aa)) is the SEC7 domain. The HDS1 domain stretch occupies residues 898 to 1106 (ELAAIAPLMN…NARVRRKNVN (209 aa)). Residue serine 1110 is modified to Phosphoserine. Disordered regions lie at residues 1111–1131 (NSIR…SLSK) and 1584–1610 (ENEN…TSSI). Composition is skewed to low complexity over residues 1117-1130 (SGST…RSLS) and 1597-1610 (SLPE…TSSI). A phosphoserine mark is found at serine 1606 and serine 1609.

The protein localises to the cytoplasm. Its subcellular location is the golgi apparatus. The protein resides in the trans-Golgi network. It is found in the cytoplasmic vesicle. It localises to the COPI-coated vesicle membrane. The protein localises to the COPII-coated vesicle membrane. Its function is as follows. Guanine exchange factor that acts as an activator of arf1 at the trans-Golgi net-work and is thus involved in vesicular budding and traffic between compartments of the Golgi apparatus. Activation of Arf (ADP-ribosylation factor) GTPases is essential for vesicle formation via recruitment of cargo adapters and coat proteins necessary for Golgi trafficking. Involved in the resistance to tamoxifen (TAM), an anticancer drug used to treat estrogen receptor (ER)-positive breast cancer. The chain is ADP-ribosylation factor guanine nucleotide-exchange factor sec72 from Schizosaccharomyces pombe (strain 972 / ATCC 24843) (Fission yeast).